The following is an 87-amino-acid chain: MMDMFFAYLLVASATPLFIWLDNKKVALSAIPPIILMWVFFFFYATESLSPLGHTLMIILFAVNVIVAHIAAFIIYGLPYLRRKRSS.

A run of 3 helical transmembrane segments spans residues 1 to 21, 26 to 46, and 56 to 76; these read MMDMFFAYLLVASATPLFIWL, VALSAIPPIILMWVFFFFYAT, and LMIILFAVNVIVAHIAAFIIY.

This sequence belongs to the YwcE family.

It localises to the cell membrane. The protein resides in the spore membrane. It is found in the spore outer membrane. Required for proper spore morphogenesis. Important for spore germination. The protein is Spore morphogenesis and germination protein YwcE (ywcE) of Bacillus subtilis (strain 168).